The chain runs to 412 residues: Phosphoglycerate kinase (412 aa).

Residues Val-20, Asp-21, Phe-22, Asn-23, Gln-35, Arg-36, Ser-59, His-60, Gly-62, Arg-63, Leu-118, Arg-119, His-166, and Arg-167 each coordinate (2R)-3-phosphoglycerate. Residue Gly-210 coordinates ADP. CDP is bound at residue Gly-210. Ala-211 and Lys-212 together coordinate AMP. An ATP-binding site is contributed by Ala-211. Ala-211 is a Mg(2+) binding site. Mg(2+) contacts are provided by Ala-214 and Asp-215. CDP is bound at residue Asp-215. Lys-216 serves as a coordination point for AMP. Lys-216 lines the ATP pocket. Gly-234 is a binding site for ADP. Position 234 (Gly-234) interacts with CDP. AMP contacts are provided by Gly-235 and Gly-308. Positions 235 and 308 each coordinate ATP. The CDP site is built by Gly-333 and Phe-338. Phe-338 provides a ligand contact to ADP. AMP is bound at residue Glu-339. ATP contacts are provided by Glu-339, Asp-370, and Thr-371. Asp-370 contributes to the Mg(2+) binding site.

The protein belongs to the phosphoglycerate kinase family. In terms of assembly, monomer. It depends on Mg(2+) as a cofactor.

The protein localises to the cytoplasm. It carries out the reaction (2R)-3-phosphoglycerate + ATP = (2R)-3-phospho-glyceroyl phosphate + ADP. It functions in the pathway carbohydrate degradation; glycolysis; pyruvate from D-glyceraldehyde 3-phosphate: step 2/5. In terms of biological role, catalyzes one of the two ATP producing reactions in the glycolytic pathway via the reversible conversion of 1,3-diphosphoglycerate to 3-phosphoglycerate. In addition to its role as a glycolytic enzyme, it seems that PGK-1 acts as a polymerase alpha cofactor protein (primer recognition protein). May play a role in sperm motility. This Aplysia californica (California sea hare) protein is Phosphoglycerate kinase (PGK).